A 155-amino-acid chain; its full sequence is Ribosome-binding factor A (155 aa).

It belongs to the RbfA family. In terms of assembly, monomer. Binds 30S ribosomal subunits, but not 50S ribosomal subunits or 70S ribosomes.

Its subcellular location is the cytoplasm. One of several proteins that assist in the late maturation steps of the functional core of the 30S ribosomal subunit. Associates with free 30S ribosomal subunits (but not with 30S subunits that are part of 70S ribosomes or polysomes). Required for efficient processing of 16S rRNA. May interact with the 5'-terminal helix region of 16S rRNA. In Methylocella silvestris (strain DSM 15510 / CIP 108128 / LMG 27833 / NCIMB 13906 / BL2), this protein is Ribosome-binding factor A.